Consider the following 306-residue polypeptide: HKEEELLGSSGGPPPEEPPKEGNPAEINVERDEKLIKVLDKLLLYLRIVHSLDYYNTCEYPNEDEMPNRCGIIHVRGPMPPNRISHGEVLEWQKTFEEKLTPLLSVRESLSEEEAQKMGRKDTEQEVEKFVTSNTQELGKDKWLCPLSGKKFKGPEFVRKHIFNKHAEKIEEVKKEVAFFNNFLTDAKRPALPEMKPAQPPGPAQILPPGLTPGLPYPHQTPQGLMPYGQPALPIFGYGAGAVRPAVPTGGPPYPHGPYGAGRGNYDAFRGQGGYPGKPRNRMVRGDPRAIVEYRDLDAPDDVDFF.

Residues 1–28 (HKEEELLGSSGGPPPEEPPKEGNPAEIN) form a disordered region. Thr-101 is subject to Phosphothreonine. The residue at position 109 (Ser-109) is a Phosphoserine. Residues 251–284 (GPPYPHGPYGAGRGNYDAFRGQGGYPGKPRNRMV) form a disordered region. Arg-263, Arg-270, and Arg-280 each carry omega-N-methylarginine.

Belongs to the ARS2 family. In terms of assembly, interacts with CASP8AP2, ERBB4, NCBP1/CBP80 and DROSHA. Interacts with LUZP4. Interacts with NCBP2/CBP20 and NCBP3.

It is found in the nucleus. Its subcellular location is the nucleoplasm. It localises to the cytoplasm. Its function is as follows. Acts as a mediator between the cap-binding complex (CBC) and the primary microRNAs (miRNAs) processing machinery during cell proliferation. Contributes to the stability and delivery of capped primary miRNA transcripts to the primary miRNA processing complex containing DGCR8 and DROSHA, thereby playing a role in RNA-mediated gene silencing (RNAi) by miRNAs. Binds capped RNAs (m7GpppG-capped RNA); however interaction is probably mediated via its interaction with NCBP1/CBP80 component of the CBC complex. Involved in cell cycle progression at S phase. Does not directly confer arsenite resistance but rather modulates arsenic sensitivity. Independently of its activity on miRNAs, necessary and sufficient to promote neural stem cell self-renewal. Does so by directly binding SOX2 promoter and positively regulating its transcription. The sequence is that of Serrate RNA effector molecule homolog (SRRT) from Cricetulus griseus (Chinese hamster).